A 310-amino-acid chain; its full sequence is Protein TIFY 6A (310 aa).

The region spanning 141–176 (SKPLPPQLTIFYAGSVLVYQDIAPEKAQAIMLLAGN) is the Tify domain. Residues 259–284 (PQTRKASLARFLEKRKERVINVSPYY) carry the Jas motif. The short motif at 261 to 268 (TRKASLAR) is the Nuclear localization signal element.

This sequence belongs to the TIFY/JAZ family. In terms of assembly, homo- and heterodimer. Interacts with MYC2, AFPH2/NINJA, TIFY10A/JAZ1, TIFY6B/JAZ3, TIFY5A/JAZ8, TIFY9/JAZ10 and TIFY3A/JAZ11. Interacts with RHD6 and RSL1. Post-translationally, ubiquitinated. Targeted for degradation by the SCF(COI1) E3 ubiquitin ligase-proteasome pathway during jasmonate signaling.

It localises to the nucleus. In terms of biological role, repressor of jasmonate responses. Interacts with and suppresses RHD6 and RSL1 transcription factor activities to negatively regulate jasmonate-stimulated root hair development. The polypeptide is Protein TIFY 6A (TIFY6A) (Arabidopsis thaliana (Mouse-ear cress)).